The following is a 415-amino-acid chain: uncharacterized protein (415 aa).

This is an uncharacterized protein from Methanocaldococcus jannaschii (strain ATCC 43067 / DSM 2661 / JAL-1 / JCM 10045 / NBRC 100440) (Methanococcus jannaschii).